Consider the following 259-residue polypeptide: MEFETIETKKEGNLFWITLNRPDKLNALNAKLLEELDRAVSQAESDPEIRVIIITGKGKAFCAGADITQFNQLTPAEAWKFSKKGREIMDKIEALSKPTIAMINGYALGGGLELALACDIRIAAEEAQLGLPEINLGIYPGYGGTQRLTRVIGKGRALEMMMTGDRIPGKDAEKYGLVNRVVPLANLEQETRKLAEKIAKKSPISLALIKEVVNRGLDSPLLSGLALESVGWGVVFSTEDKKEGVSAFLEKREPTFKGK.

Glu113 (nucleophile) is an active-site residue. Glu133 (proton acceptor) is an active-site residue.

This sequence belongs to the enoyl-CoA hydratase/isomerase family. Monomer.

The catalysed reaction is 3-hydroxypropanoyl-CoA = acryloyl-CoA + H2O. Plays a role in autotrophic carbon fixation via the 3-hydroxypropionate/4-hydroxybutyrate cycle. Catalyzes the reversible dehydration of 3-hydroxypropionyl-CoA to form acryloyl-CoA, and the reversible dehydration of (S)-3-hydroxybutyryl-CoA to form crotonyl-CoA. Inactive towards (R)-3-hydroxybutyryl-CoA. This Metallosphaera sedula (strain ATCC 51363 / DSM 5348 / JCM 9185 / NBRC 15509 / TH2) protein is 3-hydroxypropionyl-coenzyme A dehydratase.